The chain runs to 138 residues: Large ribosomal subunit protein uL16 (138 aa).

The span at 1–19 (MLIPKRVKYRRQHRPHRSG) shows a compositional bias: basic residues. Residues 1 to 24 (MLIPKRVKYRRQHRPHRSGVSKGG) are disordered.

This sequence belongs to the universal ribosomal protein uL16 family. In terms of assembly, part of the 50S ribosomal subunit.

Functionally, binds 23S rRNA and is also seen to make contacts with the A and possibly P site tRNAs. The protein is Large ribosomal subunit protein uL16 of Corynebacterium diphtheriae (strain ATCC 700971 / NCTC 13129 / Biotype gravis).